The sequence spans 856 residues: MAVDAADRREVIVKIDGENGNNNGVSGETVGKIWRDGSYDFWTDGEGNLNKGHNAAAVDSDRSAATTGEQQKDEGFEFRRGEDPPTKLIGQFLHKQQASGEICLDMDLGMDELQSRGLTPVSESPRVSTKRDPVGRRDSRSNTNNNDDGEVVKCSGNNAPIQRSSSTLLKMRTRSRLSDPPTPQLPPQTADMKSGRIPKSGQMKSGFFGKSPKTQGEEEEDDPFAAEDLPEEYRKDKLSLWIVLEWLSLILIIAGFVCTLAIPSLRKKKLWELQLWKWESMVLVLICGRLVSSWIVKIVVFFIERNFLLRKRVLYFVYGVRKAVQNCLWLGLVLLAWHFLFDEKVAKAANTKALRVVTKIFVCLLVGFLLWLVKTLLVKVLASSFHMSTYFDRIQESLFTQYVIETLSGPPLIEIQKNEEEEERISVEVKKFQNPGGVEIQSGAQKSPMKTGKSPFLSHVLSNGGGGGGENKGITIDSLHKLNPKNVSAWKMKRLMNIIRNGSLTTLDEQLQDPSLDDDKGNQIRSEFEAKLAARKIFHNVAKPGSKFIYANDIMRFLPDDEALKTLSLFEGASETNRISKSSLKNWVVNAFRERRALALTLNDTKTAVNRLHKMVNIVVGIIILVIWLIILGITSTKFLVVMSSQVVVVAFIFGNMCKIVFESIIYLFVIHPFDVGDRCEIDGVQMVVEEMNILTTVFLRFDNQKVVYPNSLLWTKSIGNYYRSPDMGDGIEFSIHITTPAEKIILIKQRITSYIEGKKDHWYPAPMIVFKDMESLNSVRIAVWPTHRMNHQDMGEKWARRSQLVEEIAKICRELDIEYRLYPLDINVRNLPTSTALPVSDRLPPNWSAPASGSN.

Disordered stretches follow at residues 45–86 (GEGN…DPPT) and 116–226 (RGLT…PFAA). 2 stretches are compositionally biased toward basic and acidic residues: residues 70–85 (QQKD…EDPP) and 129–140 (TKRDPVGRRDSR). The span at 155 to 168 (SGNNAPIQRSSSTL) shows a compositional bias: polar residues. Serine 211 carries the phosphoserine modification. Acidic residues predominate over residues 217-226 (EEEEDDPFAA). 4 helical membrane-spanning segments follow: residues 242 to 262 (IVLE…TLAI), 283 to 303 (LVLI…VFFI), 323 to 343 (AVQN…LFDE), and 360 to 380 (IFVC…LVKV). Position 462 is a phosphoserine (serine 462). 2 consecutive transmembrane segments (helical) span residues 615–635 (MVNI…LGIT) and 651–671 (AFIF…LFVI).

This sequence belongs to the MscS (TC 1.A.23) family.

It is found in the membrane. Its function is as follows. Mechanosensitive channel that opens in response to stretch forces in the membrane lipid bilayer. The polypeptide is Mechanosensitive ion channel protein 6 (MSL6) (Arabidopsis thaliana (Mouse-ear cress)).